We begin with the raw amino-acid sequence, 345 residues long: N-acetyl-gamma-glutamyl-phosphate reductase (345 aa).

The active site involves C149.

The protein belongs to the NAGSA dehydrogenase family. Type 1 subfamily.

It is found in the cytoplasm. It carries out the reaction N-acetyl-L-glutamate 5-semialdehyde + phosphate + NADP(+) = N-acetyl-L-glutamyl 5-phosphate + NADPH + H(+). The protein operates within amino-acid biosynthesis; L-arginine biosynthesis; N(2)-acetyl-L-ornithine from L-glutamate: step 3/4. Catalyzes the NADPH-dependent reduction of N-acetyl-5-glutamyl phosphate to yield N-acetyl-L-glutamate 5-semialdehyde. The protein is N-acetyl-gamma-glutamyl-phosphate reductase of Desulforapulum autotrophicum (strain ATCC 43914 / DSM 3382 / VKM B-1955 / HRM2) (Desulfobacterium autotrophicum).